Consider the following 87-residue polypeptide: Small ribosomal subunit protein uS15 (87 aa).

Belongs to the universal ribosomal protein uS15 family. Part of the 30S ribosomal subunit. Forms a bridge to the 50S subunit in the 70S ribosome, contacting the 23S rRNA.

Functionally, one of the primary rRNA binding proteins, it binds directly to 16S rRNA where it helps nucleate assembly of the platform of the 30S subunit by binding and bridging several RNA helices of the 16S rRNA. Its function is as follows. Forms an intersubunit bridge (bridge B4) with the 23S rRNA of the 50S subunit in the ribosome. The sequence is that of Small ribosomal subunit protein uS15 from Alkaliphilus metalliredigens (strain QYMF).